The chain runs to 516 residues: GMP synthase [glutamine-hydrolyzing] (516 aa).

One can recognise a Glutamine amidotransferase type-1 domain in the interval 6-199 (KVLILDFGSQ…LFEIAGLTSG (194 aa)). Catalysis depends on cysteine 83, which acts as the Nucleophile. Catalysis depends on residues histidine 173 and glutamate 175. Positions 200–391 (WTMSSFLETE…LGMPDFIIWR (192 aa)) constitute a GMPS ATP-PPase domain. 227–233 (SGGVDST) contacts ATP.

In terms of assembly, homodimer.

The enzyme catalyses XMP + L-glutamine + ATP + H2O = GMP + L-glutamate + AMP + diphosphate + 2 H(+). The protein operates within purine metabolism; GMP biosynthesis; GMP from XMP (L-Gln route): step 1/1. Functionally, catalyzes the synthesis of GMP from XMP. This chain is GMP synthase [glutamine-hydrolyzing], found in Solidesulfovibrio magneticus (strain ATCC 700980 / DSM 13731 / RS-1) (Desulfovibrio magneticus).